A 470-amino-acid polypeptide reads, in one-letter code: Arginine ADP-riboxanase OspC1 (470 aa).

Positions 138, 139, 140, 144, 157, 167, 183, 201, 206, 226, and 320 each coordinate NAD(+). Glu320 is an active-site residue. ANK repeat units lie at residues 363 to 392, 399 to 431, and 438 to 467; these read IALQ…ITRQ, HELY…DVNT, and SGDC…TSDN.

Belongs to the OspC family. In terms of assembly, interacts with host calmodulin (CALM1, CALM2 and/or CALM3); specifically interacts with the apo form of calmodulin, preventing calcium-binding.

The protein localises to the secreted. It is found in the host nucleus. It catalyses the reaction L-arginyl-[protein] + NAD(+) = ADP-riboxanated L-argininyl-[protein] + nicotinamide + NH4(+) + H(+). Functionally, ADP-riboxanase effector that mediates arginine ADP-riboxanation of host caspases. ADP-riboxanation of host apoptotic caspases (CASP3, CASP8 and CASP9) prevents their activation, thereby inhibiting host cell extrinsic and intrinsic apoptosis. Does not catalyze ADP-riboxanation of host CASP4/CASP11. Independently of its ADP-riboxanase activity, acts as an inhibitor of calcium signaling by inhibiting host calmodulin, preventing activation of the JAK-STAT signaling pathway in response to interferon-beta. Mechanistically, acts by binding to the apo form of calmodulin, preventing calcium-binding and ability to activate host CaMK2 (CAMKII), which is required to stimulate the JAK-STAT signaling pathway in response to interferon-beta. In Shigella flexneri, this protein is Arginine ADP-riboxanase OspC1.